Here is a 404-residue protein sequence, read N- to C-terminus: Acetate kinase (404 aa).

Asn-7 is a binding site for Mg(2+). Position 14 (Lys-14) interacts with ATP. Arg-95 contacts substrate. Asp-152 acts as the Proton donor/acceptor in catalysis. Residues 212–216 (HLGNG), 286–288 (DMR), and 334–338 (GIGEN) each bind ATP. Glu-388 serves as a coordination point for Mg(2+).

Belongs to the acetokinase family. Homodimer. Mg(2+) is required as a cofactor. Requires Mn(2+) as cofactor.

It localises to the cytoplasm. The catalysed reaction is acetate + ATP = acetyl phosphate + ADP. It participates in metabolic intermediate biosynthesis; acetyl-CoA biosynthesis; acetyl-CoA from acetate: step 1/2. In terms of biological role, catalyzes the formation of acetyl phosphate from acetate and ATP. Can also catalyze the reverse reaction. This chain is Acetate kinase, found in Lawsonia intracellularis (strain PHE/MN1-00).